Consider the following 215-residue polypeptide: Outer membrane protein assembly factor BamC homolog (215 aa).

The N-terminal stretch at 1-16 (MKKIILNLVTAIILAG) is a signal peptide. Residue cysteine 17 is the site of N-palmitoyl cysteine attachment. Residue cysteine 17 is the site of S-diacylglycerol cysteine attachment.

This sequence belongs to the BamC family.

Its subcellular location is the cell outer membrane. The polypeptide is Outer membrane protein assembly factor BamC homolog (Haemophilus influenzae (strain ATCC 51907 / DSM 11121 / KW20 / Rd)).